A 189-amino-acid chain; its full sequence is GTP cyclohydrolase 1 (189 aa).

3 residues coordinate Zn(2+): C76, H79, and C149.

Belongs to the GTP cyclohydrolase I family. Toroid-shaped homodecamer, composed of two pentamers of five dimers.

It carries out the reaction GTP + H2O = 7,8-dihydroneopterin 3'-triphosphate + formate + H(+). Its pathway is cofactor biosynthesis; 7,8-dihydroneopterin triphosphate biosynthesis; 7,8-dihydroneopterin triphosphate from GTP: step 1/1. This is GTP cyclohydrolase 1 from Dehalococcoides mccartyi (strain ATCC BAA-2266 / KCTC 15142 / 195) (Dehalococcoides ethenogenes (strain 195)).